The chain runs to 415 residues: Gamma-glutamyl phosphate reductase (415 aa).

This sequence belongs to the gamma-glutamyl phosphate reductase family.

It localises to the cytoplasm. The catalysed reaction is L-glutamate 5-semialdehyde + phosphate + NADP(+) = L-glutamyl 5-phosphate + NADPH + H(+). It participates in amino-acid biosynthesis; L-proline biosynthesis; L-glutamate 5-semialdehyde from L-glutamate: step 2/2. Its function is as follows. Catalyzes the NADPH-dependent reduction of L-glutamate 5-phosphate into L-glutamate 5-semialdehyde and phosphate. The product spontaneously undergoes cyclization to form 1-pyrroline-5-carboxylate. The polypeptide is Gamma-glutamyl phosphate reductase (Bacteroides fragilis (strain YCH46)).